The following is a 249-amino-acid chain: GTP cyclohydrolase III (249 aa).

This sequence belongs to the archaeal-type GTP cyclohydrolase family.

It carries out the reaction GTP + 3 H2O = 2-amino-5-formylamino-6-(5-phospho-D-ribosylamino)pyrimidin-4(3H)-one + 2 phosphate + 2 H(+). Functionally, catalyzes the formation of 2-amino-5-formylamino-6-ribofuranosylamino-4(3H)-pyrimidinone ribonucleotide monophosphate and inorganic phosphate from GTP. Also has an independent pyrophosphate phosphohydrolase activity. The protein is GTP cyclohydrolase III of Methanothermobacter thermautotrophicus (strain ATCC 29096 / DSM 1053 / JCM 10044 / NBRC 100330 / Delta H) (Methanobacterium thermoautotrophicum).